The following is a 1056-amino-acid chain: Carbamoyl phosphate synthase large chain (1056 aa).

A carboxyphosphate synthetic domain region spans residues 1–398 (MPRDPSIKKV…AFLKALRSLD (398 aa)). 12 residues coordinate ATP: Arg-127, Arg-167, Gly-173, Gly-174, Glu-206, Val-208, Glu-213, Gly-239, Val-240, His-241, Gln-282, and Glu-295. One can recognise an ATP-grasp 1 domain in the interval 131 to 324 (RDLMNRIGEP…IARVASKIAI (194 aa)). The Mg(2+) site is built by Gln-282, Glu-295, and Asn-297. Positions 282, 295, and 297 each coordinate Mn(2+). The interval 399–532 (TDVEHHTVLS…STYGDKVCEV (134 aa)) is oligomerization domain. Residues 533–921 (THSDRKKVMI…YKASIAAHNR (389 aa)) are carbamoyl phosphate synthetic domain. Residues 663 to 854 (SVLLDSLSIP…LAKIAARVMM (192 aa)) form the ATP-grasp 2 domain. Residues Arg-699, Arg-738, Leu-740, Glu-745, Gly-770, Val-771, His-772, Ser-773, Gln-813, and Glu-825 each coordinate ATP. Mg(2+)-binding residues include Gln-813, Glu-825, and Asn-827. Residues Gln-813, Glu-825, and Asn-827 each coordinate Mn(2+). The MGS-like domain occupies 920–1056 (NRLPKSGNVF…IEPLQHYIGR (137 aa)). The tract at residues 922–1056 (LPKSGNVFIS…IEPLQHYIGR (135 aa)) is allosteric domain.

Belongs to the CarB family. In terms of assembly, composed of two chains; the small (or glutamine) chain promotes the hydrolysis of glutamine to ammonia, which is used by the large (or ammonia) chain to synthesize carbamoyl phosphate. Tetramer of heterodimers (alpha,beta)4. Requires Mg(2+) as cofactor. The cofactor is Mn(2+).

It catalyses the reaction hydrogencarbonate + L-glutamine + 2 ATP + H2O = carbamoyl phosphate + L-glutamate + 2 ADP + phosphate + 2 H(+). The catalysed reaction is hydrogencarbonate + NH4(+) + 2 ATP = carbamoyl phosphate + 2 ADP + phosphate + 2 H(+). The protein operates within amino-acid biosynthesis; L-arginine biosynthesis; carbamoyl phosphate from bicarbonate: step 1/1. It functions in the pathway pyrimidine metabolism; UMP biosynthesis via de novo pathway; (S)-dihydroorotate from bicarbonate: step 1/3. Its function is as follows. Large subunit of the glutamine-dependent carbamoyl phosphate synthetase (CPSase). CPSase catalyzes the formation of carbamoyl phosphate from the ammonia moiety of glutamine, carbonate, and phosphate donated by ATP, constituting the first step of 2 biosynthetic pathways, one leading to arginine and/or urea and the other to pyrimidine nucleotides. The large subunit (synthetase) binds the substrates ammonia (free or transferred from glutamine from the small subunit), hydrogencarbonate and ATP and carries out an ATP-coupled ligase reaction, activating hydrogencarbonate by forming carboxy phosphate which reacts with ammonia to form carbamoyl phosphate. The sequence is that of Carbamoyl phosphate synthase large chain from Methanospirillum hungatei JF-1 (strain ATCC 27890 / DSM 864 / NBRC 100397 / JF-1).